A 267-amino-acid polypeptide reads, in one-letter code: Diaminopimelate epimerase (267 aa).

2 residues coordinate substrate: N15 and N66. C75 serves as the catalytic Proton donor. Substrate is bound by residues 76-77 (GN), N150, N183, and 201-202 (ER). The active-site Proton acceptor is C210. 211–212 (GT) is a substrate binding site.

This sequence belongs to the diaminopimelate epimerase family. As to quaternary structure, homodimer.

Its subcellular location is the cytoplasm. It catalyses the reaction (2S,6S)-2,6-diaminopimelate = meso-2,6-diaminopimelate. The protein operates within amino-acid biosynthesis; L-lysine biosynthesis via DAP pathway; DL-2,6-diaminopimelate from LL-2,6-diaminopimelate: step 1/1. Functionally, catalyzes the stereoinversion of LL-2,6-diaminopimelate (L,L-DAP) to meso-diaminopimelate (meso-DAP), a precursor of L-lysine and an essential component of the bacterial peptidoglycan. The protein is Diaminopimelate epimerase of Bacteroides thetaiotaomicron (strain ATCC 29148 / DSM 2079 / JCM 5827 / CCUG 10774 / NCTC 10582 / VPI-5482 / E50).